An 87-amino-acid chain; its full sequence is Transcription factor ILI4 (87 aa).

Positions 1–54 (MSSRRSSRSSVSEEEINELISKLQSLLPSSRRRGANQASTTKLLKETCSYIKSL) constitute a bHLH domain.

The protein belongs to the bHLH protein family. In terms of assembly, interacts with LO9-177. In terms of tissue distribution, expressed in phloem of leaf blades and sheaths, lamina joints, filaments before anthesis, vasculare bundles of the ovule, lemma and palea, and embryos.

It localises to the cytoplasm. In terms of biological role, atypical and probable non DNA-binding bHLH transcription factor that acts as a positive regulator of brassinosteroid (BR) response. Controls lamina inclination by participating in two BR signaling pathways involving BRI1 and RGA1. Involved in the RLI1-dependent modulation of leaf inclination by promoting lamina joint cell elongation, especially in response to phosphate (Pi) availability. The sequence is that of Transcription factor ILI4 (ILI4) from Oryza sativa subsp. japonica (Rice).